A 528-amino-acid polypeptide reads, in one-letter code: Probable serine/threonine-protein kinase DDB_G0282417 (528 aa).

Residues 49–77 (NNNNNNNNNNNNNNNNNNNNNNNNNNKNN) show a composition bias toward low complexity. The segment at 49-84 (NNNNNNNNNNNNNNNNNNNNNNNNNNKNNNDGDDAA) is disordered. One can recognise a Protein kinase domain in the interval 136–466 (QQNRVLIGEG…ESLINNHQYS (331 aa)). Residues 142 to 150 (IGEGHYGKV) and K166 each bind ATP. D266 acts as the Proton acceptor in catalysis.

Belongs to the protein kinase superfamily. Ser/Thr protein kinase family.

The catalysed reaction is L-seryl-[protein] + ATP = O-phospho-L-seryl-[protein] + ADP + H(+). It catalyses the reaction L-threonyl-[protein] + ATP = O-phospho-L-threonyl-[protein] + ADP + H(+). This chain is Probable serine/threonine-protein kinase DDB_G0282417, found in Dictyostelium discoideum (Social amoeba).